A 536-amino-acid chain; its full sequence is Lysosomal acid glucosylceramidase (536 aa).

The first 39 residues, 1–39, serve as a signal peptide directing secretion; that stretch reads MEFSSPSREECPKPSGRVNIMAGSLTGLLLLQAVSWASG. 2 disulfides stabilise this stretch: Cys43–Cys55 and Cys57–Cys62. N-linked (GlcNAc...) asparagine glycosylation is found at Asn58, Asn98, and Asn185. The active-site Proton donor is Glu274. Residue Asn309 is glycosylated (N-linked (GlcNAc...) asparagine). The active-site Nucleophile is the Glu379. A glycan (N-linked (GlcNAc...) asparagine) is linked at Asn501.

This sequence belongs to the glycosyl hydrolase 30 family. Interacts with saposin-C. Interacts with SCARB2. Interacts with TCP1. Interacts with GRN; this interaction prevents aggregation of GBA1-SCARB2 complex via interaction with HSPA1A upon stress.

It localises to the lysosome membrane. The catalysed reaction is a beta-D-glucosyl-(1&lt;-&gt;1')-N-acylsphing-4-enine + H2O = an N-acylsphing-4-enine + D-glucose. The enzyme catalyses a beta-D-galactosyl-(1&lt;-&gt;1')-N-acylsphing-4-enine + H2O = an N-acylsphing-4-enine + D-galactose. It catalyses the reaction cholesteryl 3-beta-D-glucoside + H2O = cholesterol + D-glucose. It carries out the reaction a beta-D-glucosyl-(1&lt;-&gt;1')-N-acylsphing-4-enine + cholesterol = cholesteryl 3-beta-D-glucoside + an N-acylsphing-4-enine. The catalysed reaction is beta-D-glucosyl-N-(9Z-octadecenoyl)-sphing-4E-enine + cholesterol = N-(9Z-octadecenoyl)-sphing-4-enine + cholesteryl 3-beta-D-glucoside. The enzyme catalyses beta-D-glucosyl-N-octanoylsphing-4E-enine + cholesterol = N-octanoylsphing-4-enine + cholesteryl 3-beta-D-glucoside. It catalyses the reaction beta-D-glucosyl-N-dodecanoylsphing-4-enine + cholesterol = N-dodecanoylsphing-4-enine + cholesteryl 3-beta-D-glucoside. It carries out the reaction beta-D-glucosyl-(1&lt;-&gt;1)-N-octadecanoylsphing-4-enine + cholesterol = N-octadecanoylsphing-4-enine + cholesteryl 3-beta-D-glucoside. The catalysed reaction is beta-D-glucosyl-(1&lt;-&gt;1')-N-(15Z-tetracosenoyl)-sphing-4-enine + cholesterol = N-(15Z-tetracosenoyl)-sphing-4-enine + cholesteryl 3-beta-D-glucoside. The enzyme catalyses a beta-D-galactosyl-(1&lt;-&gt;1')-N-acylsphing-4-enine + cholesterol = cholesteryl 3-beta-D-galactoside + an N-acylsphing-4-enine. It catalyses the reaction 1-(beta-D-galactosyl)-N-dodecanoylsphing-4-enine + cholesterol = cholesteryl 3-beta-D-galactoside + N-dodecanoylsphing-4-enine. It carries out the reaction a beta-D-xylosyl-(1&lt;-&gt;1')-N-acylsphing-4-enine + cholesterol = cholesteryl 3-beta-D-xyloside + an N-acylsphing-4-enine. The catalysed reaction is beta-D-xylosyl-(1&lt;-&gt;1')-N-(9Z-octadecenoyl)-sphing-4-enine + cholesterol = cholesteryl 3-beta-D-xyloside + N-(9Z-octadecenoyl)-sphing-4-enine. It participates in steroid metabolism; cholesterol metabolism. It functions in the pathway sphingolipid metabolism. Functionally, glucosylceramidase that catalyzes, within the lysosomal compartment, the hydrolysis of glucosylceramides/GlcCers (such as beta-D-glucosyl-(1&lt;-&gt;1')-N-acylsphing-4-enine) into free ceramides (such as N-acylsphing-4-enine) and glucose. Plays a central role in the degradation of complex lipids and the turnover of cellular membranes. Through the production of ceramides, participates in the PKC-activated salvage pathway of ceramide formation. Catalyzes the glucosylation of cholesterol, through a transglucosylation reaction where glucose is transferred from GlcCer to cholesterol. GlcCer containing mono-unsaturated fatty acids (such as beta-D-glucosyl-N-(9Z-octadecenoyl)-sphing-4-enine) are preferred as glucose donors for cholesterol glucosylation when compared with GlcCer containing same chain length of saturated fatty acids (such as beta-D-glucosyl-N-octadecanoyl-sphing-4-enine). Under specific conditions, may alternatively catalyze the reverse reaction, transferring glucose from cholesteryl 3-beta-D-glucoside to ceramide. Can also hydrolyze cholesteryl 3-beta-D-glucoside producing glucose and cholesterol. Catalyzes the hydrolysis of galactosylceramides/GalCers (such as beta-D-galactosyl-(1&lt;-&gt;1')-N-acylsphing-4-enine), as well as the transfer of galactose between GalCers and cholesterol in vitro, but with lower activity than with GlcCers. Contrary to GlcCer and GalCer, xylosylceramide/XylCer (such as beta-D-xyosyl-(1&lt;-&gt;1')-N-acylsphing-4-enine) is not a good substrate for hydrolysis, however it is a good xylose donor for transxylosylation activity to form cholesteryl 3-beta-D-xyloside. The chain is Lysosomal acid glucosylceramidase (GBA1) from Pongo abelii (Sumatran orangutan).